Consider the following 429-residue polypeptide: MANNTWKLIATTALISVFSTQLAKSVWKEYKLSCAANKNKTVSRPRQYDDHLFREQLARNYAFLGEEGMRKIKEQYIVIVGAGEVGSWVCTMLIRSGCQKIMIIDPENISIDSLNTHCCAVLSDIGKPKVQCLKEHLSKIAPWSEIKARAKAWTKENSHDLIFADGESPTFIVDCLDNLESKVDLLEYAHHNKIDVISSMGVATKSDPTRVSINDISMTEFDPISRCVRRKLRKRGIATGISVVFSNEMLDPRRDDILSPIDCEHRAINAVRDEALRHLPELGTMPGIFGLSIATWILTKVSGYPMKENEVKNRLKFYDSILETFQKQMARLNENKERSSLLGLEEVGYIVEEMFRGKSPISGYSTKLALTKWEANKEISLTNVVLMTKEEQEIHEKRILLDGEKLTAVYSEEVLDFIERLFKEEEYYS.

Transmembrane regions (helical) follow at residues 3-23 (NNTW…TQLA) and 74-94 (EQYI…TMLI). Serine 259 bears the Phosphoserine mark. Residues 279–299 (LPELGTMPGIFGLSIATWILT) traverse the membrane as a helical segment.

The protein belongs to the HesA/MoeB/ThiF family.

It is found in the mitochondrion outer membrane. In terms of biological role, catalyzes the ATP-dependent dehydration of threonylcarbamoyladenosine at position 37 (t(6)A37) to form cyclic t(6)A37 (ct(6)A37) in tRNAs that read codons beginning with adenine. The sequence is that of tRNA threonylcarbamoyladenosine dehydratase 1 (TCD1) from Saccharomyces cerevisiae (strain ATCC 204508 / S288c) (Baker's yeast).